The sequence spans 360 residues: Inward rectifier potassium channel 13 (360 aa).

Residues 1–50 (MDSRNCKVNAPLLSQRYRRMVTKDGHSTLQMDGAQRGLVYLRDAWGILMD) lie on the Cytoplasmic side of the membrane. Residues 51 to 77 (MRWRWMMLVFSASFVVHWLVFAVLWYA) form a helical membrane-spanning segment. Over 78–105 (VAEMNGDLEIDHDVPPENHTICVKHITS) the chain is Extracellular. The helical; Pore-forming intramembrane region spans 106–122 (FTAAFSFSLETQLTIGY). The Selectivity filter motif lies at 119–124 (TIGYGT). The Extracellular portion of the chain corresponds to 123 to 131 (GTMFPSGDC). Residues 132–157 (PSAIALLAIQMLLGLMLEAFITGAFV) traverse the membrane as a helical segment. Over 158–360 (AKIARPKNRA…FQIAETGLTE (203 aa)) the chain is Cytoplasmic. Position 201 is a phosphoserine; by PKC (Ser201). Ser287 carries the phosphoserine; by PKA modification.

This sequence belongs to the inward rectifier-type potassium channel (TC 1.A.2.1) family. KCNJ13 subfamily. In terms of assembly, homotetramer. Interacts with RAB28; the interaction may facilitate cone outer segments phagocytosis. Post-translationally, phosphorylation at Ser-201 by PKC strongly inhibits ionic currents, while phosphorylation at Ser-287 by PKA increases them.

It is found in the membrane. The protein resides in the cell membrane. It catalyses the reaction K(+)(in) = K(+)(out). With respect to regulation, inhibited by Ba(2+) and Cs(+), although sensitivity to those inhibitors is much lower than in other Kir channels. In terms of biological role, inward rectifier potassium channels are characterized by a greater tendency to allow potassium to flow into the cell rather than out of it. Their voltage dependence is regulated by the concentration of extracellular potassium; as external potassium is raised, the voltage range of the channel opening shifts to more positive voltages. The inward rectification is mainly due to the blockage of outward current by internal magnesium. KCNJ13 has a very low single channel conductance, low sensitivity to block by external barium and cesium, and no dependence of its inward rectification properties on the internal blocking particle magnesium. The protein is Inward rectifier potassium channel 13 (Kcnj13) of Rattus norvegicus (Rat).